The chain runs to 422 residues: Enolase (422 aa).

Gln-162 contributes to the (2R)-2-phosphoglycerate binding site. Glu-204 acts as the Proton donor in catalysis. Mg(2+)-binding residues include Asp-241, Glu-284, and Asp-311. Positions 336, 365, 366, and 387 each coordinate (2R)-2-phosphoglycerate. Lys-336 acts as the Proton acceptor in catalysis.

The protein belongs to the enolase family. As to quaternary structure, component of the RNA degradosome, a multiprotein complex involved in RNA processing and mRNA degradation. Mg(2+) is required as a cofactor.

The protein resides in the cytoplasm. Its subcellular location is the secreted. The protein localises to the cell surface. The catalysed reaction is (2R)-2-phosphoglycerate = phosphoenolpyruvate + H2O. The protein operates within carbohydrate degradation; glycolysis; pyruvate from D-glyceraldehyde 3-phosphate: step 4/5. Functionally, catalyzes the reversible conversion of 2-phosphoglycerate (2-PG) into phosphoenolpyruvate (PEP). It is essential for the degradation of carbohydrates via glycolysis. This Legionella pneumophila (strain Paris) protein is Enolase.